The following is a 178-amino-acid chain: Large ribosomal subunit protein uL6 (178 aa).

This sequence belongs to the universal ribosomal protein uL6 family. In terms of assembly, part of the 50S ribosomal subunit.

Its function is as follows. This protein binds to the 23S rRNA, and is important in its secondary structure. It is located near the subunit interface in the base of the L7/L12 stalk, and near the tRNA binding site of the peptidyltransferase center. This is Large ribosomal subunit protein uL6 from Leifsonia xyli subsp. xyli (strain CTCB07).